We begin with the raw amino-acid sequence, 392 residues long: Chorismate synthase (392 aa).

Residues R40 and R46 each coordinate NADP(+). FMN contacts are provided by residues 135 to 137 (RAS), 256 to 257 (QA), G300, 315 to 319 (KPISS), and R341.

Belongs to the chorismate synthase family. Homotetramer. The cofactor is FMNH2.

It catalyses the reaction 5-O-(1-carboxyvinyl)-3-phosphoshikimate = chorismate + phosphate. The protein operates within metabolic intermediate biosynthesis; chorismate biosynthesis; chorismate from D-erythrose 4-phosphate and phosphoenolpyruvate: step 7/7. Functionally, catalyzes the anti-1,4-elimination of the C-3 phosphate and the C-6 proR hydrogen from 5-enolpyruvylshikimate-3-phosphate (EPSP) to yield chorismate, which is the branch point compound that serves as the starting substrate for the three terminal pathways of aromatic amino acid biosynthesis. This reaction introduces a second double bond into the aromatic ring system. This chain is Chorismate synthase, found in Salinispora tropica (strain ATCC BAA-916 / DSM 44818 / JCM 13857 / NBRC 105044 / CNB-440).